A 258-amino-acid chain; its full sequence is Polysialic acid transport protein KpsM (258 aa).

The Cytoplasmic portion of the chain corresponds to 1 to 30; sequence MARSGFEVQKVTVEALFLREIRTRFGKFRL. Residues 30–251 form the ABC transmembrane type-2 domain; sequence LGYLWAILEP…FIGLALYRTR (222 aa). The helical transmembrane segment at 31–54 threads the bilayer; it reads GYLWAILEPSAHLLILLGILGYVM. The Periplasmic portion of the chain corresponds to 55 to 61; it reads HRTMPDI. The helical transmembrane segment at 62–81 threads the bilayer; the sequence is SFPVFLLNGLIPFFIFSSIS. Over 82–108 the chain is Cytoplasmic; sequence KRSIGAIEANQGLFNYRPVKPIDTIIA. Residues 109-132 form a helical membrane-spanning segment; it reads RALLETLIYVAVYILLMLIVWMTG. Over 133–143 the chain is Periplasmic; sequence EYFEITNFLQL. Residues 144–165 traverse the membrane as a helical segment; sequence VLTWSLLIILSCGVGLIFMVVG. Topologically, residues 166 to 174 are cytoplasmic; the sequence is KTFPEMQKV. The chain crosses the membrane as a helical span at residues 175-195; that stretch reads LPILLKPLYFISCIMFPLHSI. The Periplasmic segment spans residues 196-226; the sequence is PKQYWSYLLWNPLVHVVELSREAVMPGYISE. Residues 227-247 form a helical membrane-spanning segment; it reads GVSLNYLAMFTLVTLFIGLAL. Over 248–258 the chain is Cytoplasmic; that stretch reads YRTREEAMLTS.

It belongs to the ABC-2 integral membrane protein family.

It is found in the cell inner membrane. In terms of biological role, kpsM and KpsT constitute a system for the transport of polysialic acid across the cytoplasmic membrane. The sequence is that of Polysialic acid transport protein KpsM (kpsM) from Escherichia coli.